Reading from the N-terminus, the 302-residue chain is uncharacterized protein (302 aa).

7 helical membrane-spanning segments follow: residues 25–45, 58–78, 104–124, 158–178, 182–202, 215–235, and 247–267; these read SFIF…LQIF, FSYL…VIAL, IQVG…WMFL, YGLL…ATVL, FAWA…QYVP, ALSI…GYLL, and MMYI…MFYL. Residues 175–245 form the PQ-loop domain; it reads ATVLSSNFAW…SRLPGTNWTT (71 aa).

Its subcellular location is the membrane. This is an uncharacterized protein from Schizosaccharomyces pombe (strain 972 / ATCC 24843) (Fission yeast).